The chain runs to 392 residues: Zinc transporter zipt-7.1 (392 aa).

N-linked (GlcNAc...) asparagine glycosylation is present at Asn63. 2 helical membrane passes run Val82–Ile102 and Ile114–His134. Positions His139–Asp162 are disordered. Residues Gly142 to Asp162 show a composition bias toward basic and acidic residues. The chain crosses the membrane as a helical span at residues Gly170–Ile190. N-linked (GlcNAc...) asparagine glycosylation is present at Asn248. Helical transmembrane passes span Ile255 to Leu275, Val304 to Leu324, and Gly331 to Pro351. A glycan (N-linked (GlcNAc...) asparagine) is linked at Asn361. A helical membrane pass occupies residues Ser371–Val391.

Belongs to the ZIP transporter (TC 2.A.5) family. KE4/Catsup subfamily.

It is found in the membrane. Zinc transporter which regulates intracellular zinc levels. Required for spermatogenesis in both hermaphrodites and males where it resides in an inactive form in immature sperm, spermatids, but is likely activated in response to reduced spe-4 and spe-6 function. Upon activation, mediates the release of zinc from internal stores in spermatids into the cytoplasm. The resulting increase in cytoplasmic zinc levels promotes spermatid activation and subsequent differentiation into mature motile sperm that are capable of fertilization. This chain is Zinc transporter zipt-7.1, found in Caenorhabditis briggsae.